Reading from the N-terminus, the 874-residue chain is Alanine--tRNA ligase (874 aa).

Positions 562, 566, 665, and 669 each coordinate Zn(2+).

It belongs to the class-II aminoacyl-tRNA synthetase family. The cofactor is Zn(2+).

It localises to the cytoplasm. It carries out the reaction tRNA(Ala) + L-alanine + ATP = L-alanyl-tRNA(Ala) + AMP + diphosphate. Functionally, catalyzes the attachment of alanine to tRNA(Ala) in a two-step reaction: alanine is first activated by ATP to form Ala-AMP and then transferred to the acceptor end of tRNA(Ala). Also edits incorrectly charged Ser-tRNA(Ala) and Gly-tRNA(Ala) via its editing domain. This is Alanine--tRNA ligase from Pseudomonas syringae pv. syringae (strain B728a).